Consider the following 237-residue polypeptide: Putative N-acetylmuramoyl-L-alanine amidase (237 aa).

One can recognise a MurNAc-LAA domain in the interval Ile7 to Lys225.

Belongs to the N-acetylmuramoyl-L-alanine amidase 3 family.

Its subcellular location is the secreted. It carries out the reaction Hydrolyzes the link between N-acetylmuramoyl residues and L-amino acid residues in certain cell-wall glycopeptides.. Functionally, cell-wall hydrolase involved in septum cleavage during cell division. The protein is Putative N-acetylmuramoyl-L-alanine amidase (amiB) of Buchnera aphidicola subsp. Acyrthosiphon pisum (strain APS) (Acyrthosiphon pisum symbiotic bacterium).